Here is a 205-residue protein sequence, read N- to C-terminus: MALLDLGLESTAVPRIRVFDQQRAEAAIRELLYAIGEDPDREGLADTPARVARACRELFSGLYTDPQTVLNTMFDEEHNELVIVKEIPMYSTCEHHLVSFHGVAHIGYLPGADGRVTGLSKIARLVDLYAKRPQVQERLTSQIADALVSKLDPRGVIIVVEAEHLCMAMRGVRKPGAITTTSAVRGQFKTDAASRAEALGLILRK.

Zn(2+)-binding residues include C93, H96, and C166.

This sequence belongs to the GTP cyclohydrolase I family. As to quaternary structure, homomer.

The enzyme catalyses GTP + H2O = 7,8-dihydroneopterin 3'-triphosphate + formate + H(+). Its pathway is cofactor biosynthesis; 7,8-dihydroneopterin triphosphate biosynthesis; 7,8-dihydroneopterin triphosphate from GTP: step 1/1. The protein is GTP cyclohydrolase 1 of Mycobacterium leprae (strain Br4923).